The sequence spans 324 residues: 4-hydroxyphenylpyruvate 3-dimethylallyltransferase (324 aa).

Substrate contacts are provided by Arg-160 and Glu-281.

This sequence belongs to the aromatic prenyltransferase family. Monomer.

The catalysed reaction is 3-(4-hydroxyphenyl)pyruvate + dimethylallyl diphosphate = 3-dimethylallyl-4-hydroxyphenylpyruvate + diphosphate. Its pathway is antibiotic biosynthesis. Its function is as follows. Magnesium-independent aromatic prenyltransferase that catalyzes the irreversible transfer of a dimethylallyl group to 4-hydroxyphenylpyruvate to produce the ring A structure in the clorobiocin biosynthesis pathway. Clorobiocin is an aminocoumarin family antibiotic. The polypeptide is 4-hydroxyphenylpyruvate 3-dimethylallyltransferase (Streptomyces roseochromogenus subsp. oscitans).